Consider the following 494-residue polypeptide: DEAD-box ATP-dependent RNA helicase CshA (494 aa).

The short motif at 3 to 31 is the Q motif element; it reads ITFQDFNLSSDLMKAINRMGFEEATPIQA. One can recognise a Helicase ATP-binding domain in the interval 34 to 204; sequence IPLGLSNKDV…ERFMTEPEHV (171 aa). Position 47–54 (47–54) interacts with ATP; that stretch reads AQTGTGKT. The short motif at 152–155 is the DEAD box element; it reads DEAD. Residues 215–375 enclose the Helicase C-terminal domain; the sequence is NIQQFYLEVQ…RMKEPTLDEA (161 aa). Residues 413 to 494 are required for dimerization or oligomerization; it reads VTVVAAAIKM…SGDRRQKKSY (82 aa). The tract at residues 429-494 is disordered; the sequence is DTPVRLTDEA…SGDRRQKKSY (66 aa). Residues 443-452 show a composition bias toward basic residues; that stretch reads KRYKNQRSSK. Basic and acidic residues predominate over residues 473-488; the sequence is SYDKKRSNDRRSSGDR.

The protein belongs to the DEAD box helicase family. CshA subfamily. As to quaternary structure, homodimer or oligomer. May interact with RNA helicases CshB and DbpA (DeaD). Probably a component of the RNA degradosome complex composed of rny, rnjA, rnjB, pnp, pfkA and eno, and possibly also rnpA (although rnjA and rnjB's presence is unclear). Interacts with ribosomal proteins L1 and L3 (rplA and rplC) and the protein component of RNase RnpA. Interacts with the RNA polymerase core. It depends on Mg(2+) as a cofactor.

The protein resides in the cytoplasm. Its subcellular location is the nucleoid. The protein localises to the cell membrane. It catalyses the reaction ATP + H2O = ADP + phosphate + H(+). Its activity is regulated as follows. RNA helicase activity is inhibited by EDTA. Its function is as follows. The most abundant DEAD-box RNA helicase. An ATP-dependent RNA helicase with RNA-dependent ATPase activity. May work in conjunction with the cold shock proteins to ensure proper initiation of transcription at low and optimal temperatures. In vitro, unwinds dsRNA in both 5'- and 3'- directions. Plays a role in ribosomal 50S subunit assembly. Its deletion leads to changes in mRNA levels for over 200 transcripts. The sequence is that of DEAD-box ATP-dependent RNA helicase CshA from Bacillus subtilis (strain 168).